A 901-amino-acid polypeptide reads, in one-letter code: MGAASCEDEELEFKLVFGEEKEPPPLGPGGPGEELDSEDTPPCCRLALGEPLPYGAAPIGIPRPPPPRPGMHSPPPRPAPSPGTWESQPARSVRLGGPGGNAGGAGGGRVLECPSIRITSISPTPDPPTSLEDTSETWGDGSPRDYPPPEGFGGYREAGGQGGGAFFSPSPGSSSLSSWSFFSDASDEAALYAACDEVESELNEAASRFGLSSPLPSPRASPRPWTPEDPWSLYGPSSGGRAPEDSWLLLSAPGPVPASPRPASPCGKRRYSSSGTPSSASPALSRRGSLGEEGPEPPPPPPLPLVRDPSSPGPFDYVGAPPTESIPQKTRRTSSEQAVALPRSEEPPSCNGKLPSGTEDSVAAPGALRKEVAGMDYLAVPSPLAWSKARIGGHSPIFRTSALPPLDWPLPSQYEQLELRIEVQPRAHHRAHYETEGSRGAVKAAPGGHPVVKLLGYSEKPLTLQMFIGTADERSLRPHAFYQVHRITGKMVATASYEAVVSGTKVLEMTLLPENNMAANIDCAGILKLRNSDIELRKGETDIGRKNTRVRLVFRVHVPQGGGKVVSVQAASVPIECSQRSAQELPQVETYSPSACSVRGGEELVLTGSNFLPDSKVVFIERGPDGKLQWEEEAAVNRLQSSEVTLTLTIPEYSNKRVSRPVQVYFYVSNGRRKRSPTQSFKFLPVVFKEEPLPDSSLRGFPSTSGPPFGPDVDFSPPRPPYPSYPHEDPAYETPYLSEGFGYSTPALYPQTGPPPSYRSGLRMFPETGGTTGCARLPSVSFLPRPFPGDQYGGQGSSFALGLPFSPPAPFRPPLPSSPPLEDPFHPQSAIHPLPPEGYNEVGPGYTPGEGASEQEKARGGYSSGFRDSVPIQGITLEEVSEIIGRDLSGFPARPGEEPPA.

Disordered stretches follow at residues 15-179 and 203-362; these read LVFG…LSSW and NEAA…EDSV. A compositionally biased stretch (pro residues) spans 61 to 81; that stretch reads IPRPPPPRPGMHSPPPRPAPS. Gly residues predominate over residues 96–109; the sequence is GGPGGNAGGAGGGR. The interval 114–119 is calcineurin-binding; sequence PSIRIT. The segment covering 114 to 123 has biased composition (low complexity); sequence PSIRITSISP. The span at 151 to 165 shows a compositional bias: gly residues; sequence GFGGYREAGGQGGGA. The segment covering 166-179 has biased composition (low complexity); the sequence is FFSPSPGSSSLSSW. Residues Ser-168 and Ser-170 each carry the phosphoserine; by MAPK7 and MAPK14 modification. Ser-213 and Ser-217 each carry phosphoserine; by MAPK8 and MAPK9. One copy of the SP 1 repeat lies at 213–229; the sequence is SPLPSPRASPRPWTPED. The 2 approximate SP repeats stretch occupies residues 213-293; sequence SPLPSPRASP…LSRRGSLGEE (81 aa). 2 stretches are compositionally biased toward pro residues: residues 215 to 227 and 254 to 263; these read LPSP…PWTP and GPVPASPRPA. The short motif at 268–270 is the Nuclear localization signal element; sequence KRR. Low complexity predominate over residues 272–288; that stretch reads SSSGTPSSASPALSRRG. The SP 2; approximate repeat unit spans residues 277 to 293; that stretch reads PSSASPALSRRGSLGEE. Ser-289 bears the Phosphoserine mark. Position 334 is a phosphoserine; by RPS6KA3 (Ser-334). The residue at position 344 (Ser-344) is a Phosphoserine. The RHD domain occupies 401–582; sequence SALPPLDWPL…VPIECSQRSA (182 aa). The DNA-binding element occupies 430–437; sequence RAHYETEG. Residues 586 to 683 enclose the IPT/TIG domain; it reads PQVETYSPSA…KRSPTQSFKF (98 aa). The short motif at 672 to 674 is the Nuclear localization signal element; the sequence is RRK. A Glycyl lysine isopeptide (Lys-Gly) (interchain with G-Cter in SUMO2) cross-link involves residue Lys-689. Disordered regions lie at residues 695 to 721 and 827 to 869; these read DSSL…PRPP and PQSA…FRDS.

Member of the multicomponent NFATC transcription complex that consists of at least two components, a pre-existing cytoplasmic component NFATC2 and an inducible nuclear component NFATC1. Other NFAT proteins, such as NFATC3, or members of the activating protein-1 (AP-1) family and MAF can also bind the complex. NFAT proteins can bind DNA as monomers or dimers. Component of a promoter-binding complex composed of STAT3, NFATC3 and NFATC4; complex formation is enhanced by calcineurin. Interacts with CREBBP; this interaction potentiates transcription activation. Interacts with MAPK8/JNK1 and MAPK9/JNK2. Interacts with GATA4 (via the second Zn finger). Interacts (via N-terminus) with IRAK1 (via C-terminus). Interacts with RPS6KA3. Interacts with HOMER1, HOMER2 and HOMER3; this interaction competes with calcineurin/PPP3CA-binding and hence prevents NFATC4 dephosphorylation and activation. Interacts with ESR1 and ESR2; this interaction decreases NFATC4 transcriptional activity. Interacts with MTOR and MAPK7/ERK5. Interacts with TRIM17; this interaction prevents NFATC3 nuclear localization. Interacts with TCF25 (via C-terminus); the interaction leads to suppression of NFATC4 transcription factor activity and is reduced following stimulation with angiotensin-2. Post-translationally, phosphorylated by NFATC-kinases; dephosphorylated by calcineurin/PPP3CA. Phosphorylated on Ser-168 and Ser-170 by MTOR, IRAK1, MAPK7/ERK5 and MAPK14/p38, on Ser-213 and Ser-217 by MAPK8 and MAPK9, and on Ser-289 and Ser-344 by RPS6KA3. Phosphorylated by GSK3B. Phosphorylation by GSK3B markedly increases NFATC4 ubiquitination. Phosphorylation by MAPK8/JNK1, MAPK9/JNK2 and RPS6KA3 may stimulate NFATC4 transcriptional activity. Phosphorylation at Ser-168 and Ser-170 is stimulated by UV irradiation. Ubiquitinated, leading to degradation by the proteasome. Ubiquitination may be stimulated by GSK3B-dependent phosphorylation. Polyubiquitin linkage mainly occurs through 'Lys-48'. In terms of tissue distribution, widely expressed. In the brain, expressed in neurons. Expressed in the hippocampus (at protein level). In the hippocampus, expressed in both the CA1-CA3 pyramidal cells and the dentate gyrus granular cells. Expressed in a subset of hippocampal cells representing adult-born neurons (at protein level). Expressed in the submandibular gland (at protein level). In the olfactory system, expressed at low levels in the glomerular and granular layers and in the mitral cell layer. In the cerebellum, expressed at moderate levels in granular neurons. Expressed at moderate levels in the choroid plexus and ependymal cells. Expressed in neurons of the cochlear nucleus (at protein level). Expressed at low levels in the heart (at protein level). Expressed in ventricular cardiomyocytes (at protein level). Expressed in the lung.

The protein localises to the cytoplasm. Its subcellular location is the nucleus. Ca(2+)-regulated transcription factor that is involved in several processes, including the development and function of the immune, cardiovascular, musculoskeletal, and nervous systems. Involved in T-cell activation, stimulating the transcription of cytokine genes, including that of IL2 and IL4. Following JAK/STAT signaling activation and as part of a complex with NFATC3 and STAT3, binds to the alpha-beta E4 promoter region of CRYAB and activates transcription in cardiomyocytes. Along with NFATC3, involved in embryonic heart development. Involved in mitochondrial energy metabolism required for cardiac morphogenesis and function. Transactivates many genes involved in heart physiology. Along with GATA4, binds to and activates NPPB/BNP promoter. Activates NPPA/ANP/ANF and MYH7/beta-MHC transcription. Binds to and transactivates AGTR2 gene promoter. Involved in the regulation of adult hippocampal neurogenesis. Involved in BDNF-driven pro-survival signaling in hippocampal adult-born neurons. Involved in the formation of long-term spatial memory and long-term potentiation. In cochlear nucleus neurons, may play a role in deafferentation-induced apoptosis during a developmental critical period when auditory neurons depend on afferent input for survival. Binds to and activates the BACE1/Beta-secretase 1 promoter, hence may regulate the proteolytic processing of the amyloid precursor protein (APP). Plays a role in adipocyte differentiation. May be involved in myoblast differentiation into myotubes. Binds the consensus DNA sequence 5'-GGAAAAT-3'. In the presence of CREBBP, activates TNF transcription. Binds to PPARG gene promoter and regulates its activity. Binds to PPARG and REG3G gene promoters. The protein is Nuclear factor of activated T-cells, cytoplasmic 4 of Mus musculus (Mouse).